The chain runs to 415 residues: Pectin acetylesterase 12 (415 aa).

The signal sequence occupies residues 1 to 20 (MVKLLLVGFVVAGIILGTQA). An N-linked (GlcNAc...) asparagine glycan is attached at Asn27. Catalysis depends on charge relay system residues Ser197, Asp293, and His360.

It belongs to the pectinacetylesterase family.

Its subcellular location is the secreted. It localises to the cell wall. Hydrolyzes acetyl esters in homogalacturonan regions of pectin. In type I primary cell wall, galacturonic acid residues of pectin can be acetylated at the O-2 and O-3 positions. Decreasing the degree of acetylation of pectin gels in vitro alters their physical properties. This Arabidopsis thaliana (Mouse-ear cress) protein is Pectin acetylesterase 12.